The sequence spans 658 residues: Interferon-induced GTP-binding protein Mx1 (658 aa).

Position 1 is an N-acetylmethionine (methionine 1). The disordered stretch occupies residues 1–20; sequence MVNSKGKITDSDPGSSHLLL. The Dynamin-type G domain occupies 65-338; sequence DLALPAIAVI…LITHICKTLP (274 aa). The segment at 75 to 82 is G1 motif; sequence GDQSSGKS. 75 to 82 is a binding site for GTP; sequence GDQSSGKS. The segment at 100–102 is G2 motif; the sequence is VTR. Residues 176–179 form a G3 motif region; the sequence is DLPG. GTP is bound by residues 176-180 and 245-248; these read DLPGI and TKPD. Positions 245–248 are G4 motif; the sequence is TKPD. Positions 277 to 280 are G5 motif; that stretch reads KCRG. The segment at 339–364 is bundle signaling element (BSE); the sequence is LLEKQIKENYEKITEELQKYGSDVPE. Residues 364 to 531 form a middle domain region; that stretch reads EEEHEKMFFL…HFQMEQIVYC (168 aa). The interval 365 to 628 is stalk; it reads EEHEKMFFLI…KDTHNWLLKE (264 aa). Residues 551–554 form a critical for lipid-binding region; it reads KDKK. Positions 570 to 658 constitute a GED domain; the sequence is LSDIFEHLLA…ARRRLAKFPG (89 aa).

Belongs to the TRAFAC class dynamin-like GTPase superfamily. Dynamin/Fzo/YdjA family. As to quaternary structure, homooligomer. Oligomerizes into multimeric filamentous or ring-like structures by virtue of its stalk domain. Oligomerization is critical for GTPase activity, protein stability, and recognition of viral target structures. Interacts with TRPC1, TRPC3, TRPC4, TRPC5, TRPC6 and TRPC7. Interacts with HSPA5. Interacts with TUBB/TUBB5. Interacts with DDX39A and DDX39B. Post-translationally, ISGylated.

The protein resides in the cytoplasm. The protein localises to the endoplasmic reticulum membrane. Its subcellular location is the perinuclear region. Functionally, interferon-induced dynamin-like GTPase with antiviral activity. The sequence is that of Interferon-induced GTP-binding protein Mx1 (MX1) from Otaria byronia (South American sea lion).